The following is a 190-amino-acid chain: Orotate phosphoribosyltransferase (190 aa).

Residues Arg101, Lys102, Lys105, His107, and 128–136 (EDVVTTGGS) each bind 5-phospho-alpha-D-ribose 1-diphosphate. Positions 132 and 160 each coordinate orotate.

Belongs to the purine/pyrimidine phosphoribosyltransferase family. PyrE subfamily. Homodimer. It depends on Mg(2+) as a cofactor.

The catalysed reaction is orotidine 5'-phosphate + diphosphate = orotate + 5-phospho-alpha-D-ribose 1-diphosphate. It participates in pyrimidine metabolism; UMP biosynthesis via de novo pathway; UMP from orotate: step 1/2. Its function is as follows. Catalyzes the transfer of a ribosyl phosphate group from 5-phosphoribose 1-diphosphate to orotate, leading to the formation of orotidine monophosphate (OMP). In Synechococcus sp. (strain CC9605), this protein is Orotate phosphoribosyltransferase.